The sequence spans 1252 residues: MSRTASYAGMTTPVKDKEGHGIPCLQPIDVVECTYQYFTKSQNKLSLRVGDLIYVLTKGSNGWWDGVLIRHSANNNNNSLILDRGWFPPSFTRSILNELHGVPEIGNELEIFQAGLNLKLELSSNPVILSLEDFLDCCRDIEFKEQLAWSPIPVHERKGCCELLYYNQDLDVYCRTLPYLPQNQVETVNDYSSFPAISKIAGKKMPITSSPDLFYLNDCDVVYWYDLTRLVCHYVNLTERDLLANEREKFLTSLDLLTAQITCVYMLFRNLRLVEDSFKKTLKKLIYTLSRFSINANIWFHSTPFEEREAIASQKDPERRSPLLQSILGTFQKFHFLLRLLHFLSNPNELTILPQLTPRFFKDSFNTISWNNPFLRKHLNQHMSHDLPRQMIKAVAGASGIVAENNDEIPASKQGTSCSSETSHHSPSAPFQRRRRGTIFSNVPGSSDESDTIWSKRKKPYPLNEETLSLVRARKEQLDAKLKQMIKSANEYLSNTANFSKMLNFEMNFKTYEEVSGTIPIIDILENLDLTIYLNLRELGDENRVFDEDVAIDDEDKEFLKHSLSSLSYILSDYFNMKQYFHDVVVKFIIVAQHLTLEDPFVFSPMQNDLPTGYYEPMKPSSLNLDNAKDKKNGSQNTDIQEEEDEYEPDPDSLILFHNLINQDSDFNDLKFFNLAHVFKKSCDDYFDVLKLSIEFVNRLILERENLLNYAARMMKNNITELLLRGEEGYGSYDGGETAEKSDTNAVYADSDTKDNDEWRDSQVKLPRYLQREYDSELIWGSNNRIKGGSKHALISYLTDNEKKDLFFNITFLITFRSIFTTTEFLSYLISQYNLDPPEDLCFEEYNEWVTKKLIPVKCRVVEIMTTFFKQYWFPGYDEPDLATLNLDYFAQVAIKENITGSVELLKEVNQKFKHGNMQEATAPMKTLDQQICQEHYWGTLYSTTESILAVDPVLFATQLTILEHEIYCEITIFDCLQKIWKNKYTKSYGASPGLNEFISFANKLTNFISYSIVKEADKSKRAKLLSHFIFIAEYCRKFNNFSSMTAIISALYSSSIYRLEKTWQAVIPQTRDLLQSLDKLMDPKKNFINYRSELKSLHSAPCVPFFGVYLSDLTFTDSGNPDYLVLEHGLKGVHDEKKYINFNKRSRLVDILQEIIYFKKTHYDFTKDRTVIECISNSLENIPHIEKQYQLSLIIEPKPRKKVVPNSNSNNKSQEKSRDDQTDEGKTSTKKDRFSKFQLHKTKKKAPKVSK.

Residues 26-97 form the SH3 domain; it reads QPIDVVECTY…PPSFTRSILN (72 aa). 2 disordered regions span residues 409–454 and 623–648; these read IPAS…DTIW and LNLD…DEYE. Low complexity predominate over residues 416–428; it reads TSCSSETSHHSPS. The region spanning 782-914 is the N-terminal Ras-GEF domain; the sequence is SNNRIKGGSK…LLKEVNQKFK (133 aa). The region spanning 952-1199 is the Ras-GEF domain; it reads DPVLFATQLT…YQLSLIIEPK (248 aa). A disordered region spans residues 1201–1252; the sequence is RKKVVPNSNSNNKSQEKSRDDQTDEGKTSTKKDRFSKFQLHKTKKKAPKVSK. The segment covering 1214–1236 has biased composition (basic and acidic residues); sequence SQEKSRDDQTDEGKTSTKKDRFS. Basic residues predominate over residues 1239-1252; that stretch reads QLHKTKKKAPKVSK.

Its function is as follows. Promotes the exchange of Ras-bound GDP by GTP. In Saccharomyces cerevisiae (strain RM11-1a) (Baker's yeast), this protein is Guanine nucleotide exchange factor SDC25 (SDC25).